We begin with the raw amino-acid sequence, 449 residues long: Plasmepsin IV (449 aa).

The Cytoplasmic segment spans residues M1–K37. Residues M1–G121 constitute a propeptide that is removed on maturation. Residues L38 to I58 form a helical; Signal-anchor for type II membrane protein membrane-spanning segment. Residues G59–L449 lie on the Lumenal side of the membrane. In terms of domain architecture, Peptidase A1 spans F137 to A444. The active site involves D155. Residues C168 and C173 are joined by a disulfide bond. Residue D335 is part of the active site. The cysteines at positions 370 and 406 are disulfide-linked.

It belongs to the peptidase A1 family. As to quaternary structure, component of the hemozoin formation complex (HFC) composed of falcipains FP2A and/or FP2B, plasmepsins PMII, PMIII/HAP and PMIV, heme detoxifying protein HDP and falcilysin FLN. The HFC complex is involved in hemoglobin degradation and detoxification of heme in the food vacuole during the asexual blood stage. In terms of processing, proteolytically cleaved into the soluble active mature form by cysteine proteases in the digestive vacuole of trophozoites. Proteolysis requires an acidic environment. Autoprocessing or transprocessing by other plasmepsins such as PMII may serve as an alternate activation system.

Its subcellular location is the membrane. It localises to the vacuole lumen. It catalyses the reaction Hydrolysis of the bonds linking certain hydrophobic residues in hemoglobin or globin. Also cleaves small molecules substrates such as Ala-Leu-Glu-Arg-Thr-Phe-|-Phe(NO2)-Ser-Phe-Pro-Thr.. With respect to regulation, inhibited by pepstatin A. In terms of biological role, during the asexual blood stage, catalyzes the cleavage of denatured host hemoglobin (Hb) or globins. Digestion of host Hb is an essential step which provides the parasite with amino acids for protein synthesis, and regulates osmolarity. The sequence is that of Plasmepsin IV from Plasmodium falciparum (isolate HB3).